A 24-amino-acid polypeptide reads, in one-letter code: Iron-regulated 31 kDa protein (24 aa).

Its subcellular location is the periplasm. Functionally, may be involved in iron uptake. This chain is Iron-regulated 31 kDa protein, found in Haemophilus influenzae.